A 938-amino-acid polypeptide reads, in one-letter code: Translation initiation factor IF-2 (938 aa).

Over residues 57-205 (DKSKKVASKE…PKSEETKSEE (149 aa)) the composition is skewed to basic and acidic residues. The tract at residues 57-350 (DKSKKVASKE…RSADDLAQQE (294 aa)) is disordered. The segment covering 206–215 (TTEGGESEEK) has biased composition (acidic residues). Over residues 248 to 259 (KKEEKKEDDKKD) the composition is skewed to basic and acidic residues. Basic residues-rich tracts occupy residues 260–270 (KDRRKKRRRRI) and 285–296 (GAKKGGRTRSKP). Basic and acidic residues predominate over residues 297–319 (ITKEEPTEEEVQKQVRETLEKLQ). A compositionally biased stretch (basic residues) spans 323-333 (SKGKGAKYRRQ). Basic and acidic residues predominate over residues 334-344 (KRDEHRQRSAD). The tr-type G domain maps to 434 to 602 (TRAPIVTVMG…KVLLEAEILE (169 aa)). The interval 443 to 450 (GHVDHGKT) is G1. 443-450 (GHVDHGKT) is a binding site for GTP. The interval 468–472 (GITQH) is G2. The G3 stretch occupies residues 490 to 493 (DTPG). GTP contacts are provided by residues 490 to 494 (DTPGH) and 544 to 547 (NKSD). Residues 544–547 (NKSD) are G4. Residues 580 to 582 (SAK) are G5.

The protein belongs to the TRAFAC class translation factor GTPase superfamily. Classic translation factor GTPase family. IF-2 subfamily.

The protein localises to the cytoplasm. Functionally, one of the essential components for the initiation of protein synthesis. Protects formylmethionyl-tRNA from spontaneous hydrolysis and promotes its binding to the 30S ribosomal subunits. Also involved in the hydrolysis of GTP during the formation of the 70S ribosomal complex. This chain is Translation initiation factor IF-2, found in Christiangramia forsetii (strain DSM 17595 / CGMCC 1.15422 / KT0803) (Gramella forsetii).